Reading from the N-terminus, the 236-residue chain is MASLDRVKVLVLGDSGVGKSSLVHLLCQNQVLGNPSWTVGCSVDVRVHDYKEGTPEEKTYYIELWDVGGSVGSASSVKSTRAVFYNSVNGIILVHDLTNKKSSQNLYRWSLEALNRDLVPTGVLVTNGDYDREQFADNQIPLLVIGTKLDQIHENKRHEVLTRTAFLAEDFNAEEINLDCTNPRYLAAGSSNAVKLSRFFDKVIEKRYFLRDGNQIPGFPDRKRFGGGTLKSLHYD.

Residues 1 to 236 (MASLDRVKVL…GGTLKSLHYD (236 aa)) form a small GTPase-like region. Residues 16–21 (GVGKSS), 148–150 (KLD), and 179–180 (DC) each bind GTP.

The protein belongs to the small GTPase superfamily. Rab family. As to quaternary structure, homodimer. Interacts with GPR89; the interaction stabilizes GPR89. Interacts with RAP1GDS1.

Functionally, required for KRAS signaling regulation and modulation of cell proliferation. Regulator of KRAS prenylation, and probably prenylation of other small GTPases. Required for lymphocyte development and function. Not required for myeloid cell development. The polypeptide is Rab-like protein 3 (RABL3) (Bos taurus (Bovine)).